The following is a 179-amino-acid chain: Large ribosomal subunit protein uL6 (179 aa).

This sequence belongs to the universal ribosomal protein uL6 family. As to quaternary structure, part of the 50S ribosomal subunit.

In terms of biological role, this protein binds to the 23S rRNA, and is important in its secondary structure. It is located near the subunit interface in the base of the L7/L12 stalk, and near the tRNA binding site of the peptidyltransferase center. The chain is Large ribosomal subunit protein uL6 from Syntrophotalea carbinolica (strain DSM 2380 / NBRC 103641 / GraBd1) (Pelobacter carbinolicus).